The sequence spans 427 residues: Tumor necrosis factor receptor superfamily member 16 (427 aa).

The first 28 residues, 1–28 (MGAGATGRAMDGPRLLLLLLLGVSLGGA), serve as a signal peptide directing secretion. The Extracellular segment spans residues 29-250 (KEACPTGLYT…PVVTRGTTDN (222 aa)). 4 TNFR-Cys repeats span residues 31–64 (ACPT…QTVC), 66–107 (PCLD…DAVC), 108–146 (RCAY…NTVC), and 148–188 (ECPD…DAEC). Intrachain disulfides connect Cys-32–Cys-43, Cys-44–Cys-57, Cys-47–Cys-64, Cys-67–Cys-83, Cys-86–Cys-99, Cys-89–Cys-107, Cys-109–Cys-122, Cys-125–Cys-138, Cys-128–Cys-146, Cys-149–Cys-164, Cys-167–Cys-180, and Cys-170–Cys-188. An N-linked (GlcNAc...) asparagine glycan is attached at Asn-60. The disordered stretch occupies residues 194–219 (RWITRSTPPEGSDSTAPSTQEPEAPP). Positions 197–214 (TRSTPPEGSDSTAPSTQE) are enriched in polar residues. Residues 251–272 (LIPVYCSILAAVVVGLVAYIAF) form a helical membrane-spanning segment. Residues 273 to 427 (KRWNSCKQNK…CSESTATSPV (155 aa)) lie on the Cytoplasmic side of the membrane. 2 stretches are compositionally biased toward polar residues: residues 281-291 (NKQGANSRPVN) and 305-326 (SGIS…TASG). The segment at 281-338 (NKQGANSRPVNQTPPPEGEKLHSDSGISVDSQSLHDQQPHTQTASGQALKGDGGLYSS) is disordered. Ser-311 is subject to Phosphoserine. Residues 326–341 (GQALKGDGGLYSSLPP) are mediates interaction with KIDINS220. A Death domain is found at 344–421 (REEVEKLLNG…DLVESLCSES (78 aa)).

As to quaternary structure, homodimer; disulfide-linked. Heterodimer with SORCS2. The extracellular domains of the heterodimer bind NGF. The cytoplasmic region of the heterodimer binds TRIO. NGF binding mediates dissociation of TRIO from the receptor complex. Interacts with RTN4R. Interacts with TRAF2, TRAF4, TRAF6, PTPN13 and RANBP9. Interacts through TRAF6 with SQSTM1 which bridges NGFR to NTRK1. Interacts with BEX1. Interacts with BEX3. Interacts with KIDINS220 and NTRK1. Can form a ternary complex with NTRK1 and KIDINS220 and this complex is affected by the expression levels of KIDINS220. An increase in KIDINS220 expression leads to a decreased association of NGFR and NTRK1. Interacts with NTRK2; may regulate the ligand specificity of the NTRK2 receptor. Interacts (via death domain) with RAB31. Interacts with LINGO1. Interacts with NRADD. Interacts with MAGED1; the interaction antagonizes the association NGFR:NTRK1. Interacts (via death domain) with ARHGDIA and RIPK2. Interacts with BFAR. Post-translationally, N- and O-glycosylated. O-linked glycans consist of Gal(1-3)GalNAc core elongated by 1 or 2 NeuNAc. In terms of processing, phosphorylated on serine residues.

The protein resides in the cell membrane. It is found in the cytoplasm. Its subcellular location is the perikaryon. It localises to the cell projection. The protein localises to the growth cone. The protein resides in the dendritic spine. Functionally, low affinity receptor which can bind to NGF, BDNF, NTF3, and NTF4. Forms a heterodimeric receptor with SORCS2 that binds the precursor forms of NGF, BDNF and NTF3 with high affinity, and has much lower affinity for mature NGF and BDNF. Plays an important role in differentiation and survival of specific neuronal populations during development. Can mediate cell survival as well as cell death of neural cells. Plays a role in the inactivation of RHOA. Plays a role in the regulation of the translocation of GLUT4 to the cell surface in adipocytes and skeletal muscle cells in response to insulin, probably by regulating RAB31 activity, and thereby contributes to the regulation of insulin-dependent glucose uptake. Necessary for the circadian oscillation of the clock genes BMAL1, PER1, PER2 and NR1D1 in the suprachiasmatic nucleus (SCmgetaN) of the brain and in liver and of the genes involved in glucose and lipid metabolism in the liver. Together with BFAR negatively regulates NF-kappa-B and JNK-related signaling pathways. The chain is Tumor necrosis factor receptor superfamily member 16 (NGFR) from Homo sapiens (Human).